The following is a 172-amino-acid chain: MRIALLWVAFGALALAAFESIGSFRSEFVQTIRSEDGKIIEYRGRVYAKSPYYGLWKYEKPMEKEIYIVDKQVVIYEPALEQATVSSLQNSIDFMALLRQSKRNSEGIYEATVFEQKYQILADEKGEPQKVFFIDKLHNEVQIIFKNAEINPVLEKEMFLFMPSGEIDLIRQ.

Positions 1 to 16 are cleaved as a signal peptide; the sequence is MRIALLWVAFGALALA.

It belongs to the LolA family. In terms of assembly, monomer.

It localises to the periplasm. Its function is as follows. Participates in the translocation of lipoproteins from the inner membrane to the outer membrane. Only forms a complex with a lipoprotein if the residue after the N-terminal Cys is not an aspartate (The Asp acts as a targeting signal to indicate that the lipoprotein should stay in the inner membrane). The polypeptide is Outer-membrane lipoprotein carrier protein (Wolinella succinogenes (strain ATCC 29543 / DSM 1740 / CCUG 13145 / JCM 31913 / LMG 7466 / NCTC 11488 / FDC 602W) (Vibrio succinogenes)).